The primary structure comprises 383 residues: Polyketide synthase 4 (383 aa).

C164 functions as the Nucleophile and monoketide coumarate intermediate in the catalytic mechanism.

Belongs to the thiolase-like superfamily. Chalcone/stilbene synthases family. In terms of assembly, homodimer. In terms of tissue distribution, expressed in fruits.

It catalyses the reaction 4-coumaroyl-CoA + malonyl-CoA + H2O + H(+) = 4-hydroxybenzalacetone + 2 CO2 + 2 CoA. The catalysed reaction is (E)-4-coumaroyl-CoA + 3 malonyl-CoA + 3 H(+) = 2',4,4',6'-tetrahydroxychalcone + 3 CO2 + 4 CoA. The protein operates within secondary metabolite biosynthesis; flavonoid biosynthesis. Inhibited by glutathione. Bifunctional polyketide synthase producing both 4-hydroxybenzalacetone and naringenin chalcone. Can use p-coumaryl-CoA and ferulyl-CoA as substrates. Catalyzes the initial key reaction step in the biosynthesis of phenylbutanoids. The sequence is that of Polyketide synthase 4 (PKS4) from Rubus idaeus (Raspberry).